A 99-amino-acid chain; its full sequence is Protein adenylyltransferase MntA (99 aa).

A GSX(10)DXD motif motif is present at residues 33–47; the sequence is GSYVRGEAKEDSDVD. Catalysis depends on residues Asp45 and Asp47. Positions 45, 47, and 77 each coordinate Mg(2+).

Belongs to the MntA antitoxin family. The cofactor is Mg(2+).

It carries out the reaction L-tyrosyl-[protein] + ATP = O-(5'-adenylyl)-L-tyrosyl-[protein] + diphosphate. The catalysed reaction is O-(5'-adenylyl)-L-tyrosyl-[protein] + ATP = O-[5'-(adenylyl-(5'-&gt;3')-adenylyl)]-L-tyrosyl-[protein] + diphosphate. Antitoxin component of a type VII toxin-antitoxin (TA) system. Overexpression in E.coli neutralizes the toxic effect of cognate toxin HepT. Neutralization is mostly due to AMPylation of the toxin by this enzyme. This Thermococcus cleftensis (strain DSM 27260 / KACC 17922 / CL1) protein is Protein adenylyltransferase MntA.